The sequence spans 429 residues: Enolase (429 aa).

Glutamine 162 serves as a coordination point for (2R)-2-phosphoglycerate. The active-site Proton donor is the glutamate 204. Mg(2+)-binding residues include aspartate 241, glutamate 283, and aspartate 310. (2R)-2-phosphoglycerate contacts are provided by lysine 335, arginine 364, serine 365, and lysine 386. Lysine 335 serves as the catalytic Proton acceptor.

The protein belongs to the enolase family. Mg(2+) serves as cofactor.

It localises to the cytoplasm. Its subcellular location is the secreted. The protein resides in the cell surface. It catalyses the reaction (2R)-2-phosphoglycerate = phosphoenolpyruvate + H2O. It participates in carbohydrate degradation; glycolysis; pyruvate from D-glyceraldehyde 3-phosphate: step 4/5. Catalyzes the reversible conversion of 2-phosphoglycerate (2-PG) into phosphoenolpyruvate (PEP). It is essential for the degradation of carbohydrates via glycolysis. In Mycolicibacterium gilvum (strain PYR-GCK) (Mycobacterium gilvum (strain PYR-GCK)), this protein is Enolase.